The sequence spans 898 residues: Coiled-coil domain-containing protein 186 (898 aa).

3 disordered regions span residues 1 to 43, 68 to 95, and 702 to 749; these read MSET…NESK, NYIP…QIAN, and RRKL…SSVA. Serine 2 carries the N-acetylserine modification. A compositionally biased stretch (polar residues) spans 82–95; that stretch reads KTDTGSENSEQIAN. A coiled-coil region spans residues 201–712; sequence KYLQQEHIIK…RKLDQVESGS (512 aa). Basic and acidic residues predominate over residues 703 to 717; sequence RKLDQVESGSYDKEV. Low complexity predominate over residues 718 to 734; the sequence is SSMGSRSSSSGSLNARS. A Phosphoserine modification is found at serine 740. 2 coiled-coil regions span residues 759–803 and 855–894; these read AMLI…IQSY and KLQA…LEQR.

The polypeptide is Coiled-coil domain-containing protein 186 (CCDC186) (Homo sapiens (Human)).